A 101-amino-acid polypeptide reads, in one-letter code: NAD(P)H-quinone oxidoreductase subunit 4L, chloroplastic (101 aa).

3 helical membrane passes run 2-22 (MLEH…YGLI), 32-52 (MCLE…SDFF), and 61-81 (IFSI…LAIV).

Belongs to the complex I subunit 4L family. As to quaternary structure, NDH is composed of at least 16 different subunits, 5 of which are encoded in the nucleus.

The protein resides in the plastid. The protein localises to the chloroplast thylakoid membrane. The catalysed reaction is a plastoquinone + NADH + (n+1) H(+)(in) = a plastoquinol + NAD(+) + n H(+)(out). It catalyses the reaction a plastoquinone + NADPH + (n+1) H(+)(in) = a plastoquinol + NADP(+) + n H(+)(out). NDH shuttles electrons from NAD(P)H:plastoquinone, via FMN and iron-sulfur (Fe-S) centers, to quinones in the photosynthetic chain and possibly in a chloroplast respiratory chain. The immediate electron acceptor for the enzyme in this species is believed to be plastoquinone. Couples the redox reaction to proton translocation, and thus conserves the redox energy in a proton gradient. This chain is NAD(P)H-quinone oxidoreductase subunit 4L, chloroplastic, found in Guizotia abyssinica (Niger).